Reading from the N-terminus, the 639-residue chain is Serine protease HtrA-like (639 aa).

Basic and acidic residues-rich tracts occupy residues 1–13, 21–75, 106–187, and 195–205; these read MDND…PREQ, YFHN…EIHQ, QQLK…KESS, and KSQKIEQKEQK. The interval 1-262 is disordered; the sequence is MDNDKKHVIP…LENEPKNNDT (262 aa). Over residues 206 to 219 the composition is skewed to polar residues; that stretch reads ASSNETSNKELNSY. Composition is skewed to basic and acidic residues over residues 220–235 and 245–262; these read TKDK…DLKK and NKLE…NNDT. A helical transmembrane segment spans residues 277 to 297; the sequence is IVIVVAIILIVILISAIISTM. Active-site charge relay system residues include His374, Asp404, and Ser489. The region spanning 527–629 is the PDZ domain; sequence EIAEELEKKG…TLSAKIYREG (103 aa).

It belongs to the peptidase S1C family.

The protein localises to the cell membrane. In Staphylococcus haemolyticus (strain JCSC1435), this protein is Serine protease HtrA-like.